We begin with the raw amino-acid sequence, 296 residues long: Cell surface glycoprotein CD200 receptor 3 (296 aa).

An N-terminal signal peptide occupies residues Met-1–Cys-25. Topologically, residues Ser-26–Ser-245 are extracellular. Positions Pro-48–Gln-162 constitute an Ig-like V-type domain. A disulfide bridge connects residues Cys-75 and Cys-146. The Ig-like C2-type domain maps to Thr-151–Ser-232. N-linked (GlcNAc...) asparagine glycosylation is found at Asn-167 and Asn-199. A disulfide bridge links Cys-172 with Cys-220. The helical transmembrane segment at Leu-246–Phe-266 threads the bilayer. The Cytoplasmic segment spans residues Gln-267 to Gly-296.

Belongs to the CD200R family. Isoform 3 interacts with TYROBP. Isoform 8 does not interact with TYROBP. In terms of tissue distribution, expressed in uterus and bone marrow-derived mast cells (at protein level). Expressed in uterus, spleen, bone marrow-derived dendritic, basophil and mast cells. Expressed in the lung of N.brasiliensis-infected mice. Weakly expressed in brain, testis, lung and thymus.

Its subcellular location is the membrane. According to PubMed:15187158 isoform 4 is a receptor for the CD200 cell surface glycoprotein. According to PubMed:16081818 isoform 4 is not a receptor for the CD200/OX2 cell surface glycoprotein. Isoform 1, isoform 2 and isoform 3 are involved in the recruitment or surface expression of the TYROBP receptor. Isoform 6, isoform 7 and isoform 8 are not involved in the recruitment or surface expression of the TYROBP receptor. This chain is Cell surface glycoprotein CD200 receptor 3 (Cd200r3), found in Mus musculus (Mouse).